A 319-amino-acid polypeptide reads, in one-letter code: Annexin A5 (319 aa).

Ala2 carries the N-acetylalanine modification. 4 Annexin repeats span residues 13–84 (FDGR…ALMK), 85–156 (PSRL…VLLQ), 168–240 (AQVE…AVVK), and 244–315 (SIPA…LLCG). Residue Lys27 forms a Glycyl lysine isopeptide (Lys-Gly) (interchain with G-Cter in SUMO1); alternate linkage. Lys27 participates in a covalent cross-link: Glycyl lysine isopeptide (Lys-Gly) (interchain with G-Cter in SUMO2); alternate. Ser35 is modified (phosphoserine). N6-acetyllysine occurs at positions 68, 74, 77, 95, and 99. Lys288 carries the N6-succinyllysine modification. Positions 312–318 (LLCGGED) match the [IL]-x-C-x-x-[DE] motif motif.

It belongs to the annexin family. In terms of assembly, monomer. Binds ATRX, EIF5B and DNMT1. Post-translationally, S-nitrosylation is induced by interferon-gamma and oxidatively-modified low-densitity lipoprotein (LDL(ox)) possibly implicating the iNOS-S100A8/9 transnitrosylase complex.

This protein is an anticoagulant protein that acts as an indirect inhibitor of the thromboplastin-specific complex, which is involved in the blood coagulation cascade. This is Annexin A5 (Anxa5) from Rattus norvegicus (Rat).